Consider the following 325-residue polypeptide: MNRLGSVQRKMPCVFVTEVKAEPSAKREHQPFKVLATETLSEKALDADVYNAVATEKVDGTCCYVTNYKGQPYLWARLDRKPNKQADKRFKKFLHSKENAKEFHWNTEEDFKPVPECWIPAKEIEKQNGKPVPDENGHIPGWVPVEKNSKQYCWHSSVVSYEFGIALVLRHHPDDPGVLEISAVPLSELLEQTLELIGTNINGNPYGLGSKKYPLHFLTPHGAFQVRNLPTLKHNDLLSWFEGCREGQIEGIVWHCGDGCLIKVHRHHLGLCWPLPDTYMNSKPVIINMNLDKYDCAFDHQSLFNKFSKIDKQKFDRLKDITLDI.

It depends on Mg(2+) as a cofactor. Mn(2+) serves as cofactor. Post-translationally, AMPylates itself (auto-AMPylation).

It catalyses the reaction ATP + (ribonucleotide)n-3'-hydroxyl + 5'-phospho-(ribonucleotide)m = (ribonucleotide)n+m + AMP + diphosphate.. In terms of biological role, functions as an RNA ligase, in vitro. The ligation reaction entails three nucleotidyl transfer steps. In the first step, the RNA ligase reacts with ATP in the absence of nucleic acid to form a covalent ligase-AMP intermediate and release pyrophosphate. In step 2, the ligase-AMP binds to the nucleic acid and transfers the adenylate to the 5'-PO4 terminus to form an adenylylated intermediate. In step 3, the RNA ligase directs the attack of the 3'-OH on the 5'-phosphoanhydride linkage, resulting in a repaired 3'-5' phosphodiester and release of AMP. Exhibits selectivity for single-stranded RNA substrates and may not have nick-sealing activity on double-stranded DNA-RNA hybrids. May play a role in maintaining RNA integrity under stress conditions, for example in response to reactive oxygen species (ROS). The protein is RNA ligase 1 of Rattus norvegicus (Rat).